A 361-amino-acid chain; its full sequence is sn-glycerol-3-phosphate import ATP-binding protein UgpC (361 aa).

Positions 4–235 (LSFRNLKKTY…PASTFVAGFI (232 aa)) constitute an ABC transporter domain. 37–44 (GPSGCGKS) lines the ATP pocket.

Belongs to the ABC transporter superfamily. sn-glycerol-3-phosphate importer (TC 3.A.1.1.3) family. As to quaternary structure, the complex is composed of two ATP-binding proteins (UgpC), two transmembrane proteins (UgpA and UgpE) and a solute-binding protein (UgpB).

The protein localises to the cell inner membrane. It catalyses the reaction sn-glycerol 3-phosphate(out) + ATP + H2O = sn-glycerol 3-phosphate(in) + ADP + phosphate + H(+). In terms of biological role, part of the ABC transporter complex UgpBAEC involved in sn-glycerol-3-phosphate (G3P) import. Responsible for energy coupling to the transport system. The chain is sn-glycerol-3-phosphate import ATP-binding protein UgpC from Bordetella avium (strain 197N).